The sequence spans 248 residues: Isoprenyl transferase (248 aa).

Asp28 is a catalytic residue. Asp28 is a binding site for Mg(2+). Substrate is bound by residues 29-32 (GNGR), Trp33, Arg41, His45, and 73-75 (SSE). Residue Asn76 is the Proton acceptor of the active site. Residues Trp77, Arg79, Arg196, and 202-204 (RLS) contribute to the substrate site. Glu215 serves as a coordination point for Mg(2+).

It belongs to the UPP synthase family. Homodimer. Mg(2+) is required as a cofactor.

Catalyzes the condensation of isopentenyl diphosphate (IPP) with allylic pyrophosphates generating different type of terpenoids. The chain is Isoprenyl transferase from Zymomonas mobilis subsp. mobilis (strain ATCC 31821 / ZM4 / CP4).